A 357-amino-acid chain; its full sequence is MKNYKIVLLSGDGIGPEISEVSKKVLKKLSRKHNFNIEIIEKLFGGIAYEKYGTPAPDETLDQCKKCDAVLLACVGDIKYDSLARELRPESGLLKLRSALGLFANIRPVKIRKSLVNTSTLKKEIVENVDLIVVRELIGGIYFGKPRGHITNTKIPKAFNTMVYDSAEIERITEIAIKIANQRNKKICSVDKSNVLEVSQLWRDTVLNITLKDKNISLSNMYVDNAAMQLVRDPSQFDVILTSNLFGDILSDLAAMLTGSIGMLPSASLNNNGPGVFEPVHGSAPDIAGKNIANPIAMLLSASMMLKIGLNEEEAAKNLETAVDKVLAEGFRTADLADGSSEVLSCSEIGDKIIDEI.

Residues Arg-97, Arg-107, Arg-135, and Asp-224 each coordinate substrate. Residues Asp-224, Asp-248, and Asp-252 each contribute to the Mg(2+) site. Residue 282-294 (GSAPDIAGKNIAN) participates in NAD(+) binding.

It belongs to the isocitrate and isopropylmalate dehydrogenases family. LeuB type 1 subfamily. Homodimer. Mg(2+) is required as a cofactor. Requires Mn(2+) as cofactor.

It is found in the cytoplasm. The enzyme catalyses (2R,3S)-3-isopropylmalate + NAD(+) = 4-methyl-2-oxopentanoate + CO2 + NADH. Its pathway is amino-acid biosynthesis; L-leucine biosynthesis; L-leucine from 3-methyl-2-oxobutanoate: step 3/4. Catalyzes the oxidation of 3-carboxy-2-hydroxy-4-methylpentanoate (3-isopropylmalate) to 3-carboxy-4-methyl-2-oxopentanoate. The product decarboxylates to 4-methyl-2 oxopentanoate. The chain is 3-isopropylmalate dehydrogenase from Prochlorococcus marinus (strain MIT 9312).